A 132-amino-acid polypeptide reads, in one-letter code: Small ribosomal subunit protein uS13 (132 aa).

The span at 101–125 (RGLPVRGQRTKTNARTRKGPRKTVA) shows a compositional bias: basic residues. The disordered stretch occupies residues 101–132 (RGLPVRGQRTKTNARTRKGPRKTVANKKIETR).

It belongs to the universal ribosomal protein uS13 family. In terms of assembly, part of the 30S ribosomal subunit. Forms a loose heterodimer with protein S19. Forms two bridges to the 50S subunit in the 70S ribosome.

Its function is as follows. Located at the top of the head of the 30S subunit, it contacts several helices of the 16S rRNA. In the 70S ribosome it contacts the 23S rRNA (bridge B1a) and protein L5 of the 50S subunit (bridge B1b), connecting the 2 subunits; these bridges are implicated in subunit movement. Contacts the tRNAs in the A and P-sites. The polypeptide is Small ribosomal subunit protein uS13 (Ureaplasma urealyticum serovar 10 (strain ATCC 33699 / Western)).